The chain runs to 119 residues: uncharacterized protein (119 aa).

Positions 1–29 (MKKVGEEEIKQEENEKEKIVKKLNESDVK) form a coiled coil.

This is an uncharacterized protein from Acidianus sp. F28 (AFV-2).